A 272-amino-acid polypeptide reads, in one-letter code: Rhomboid-type serine protease B (272 aa).

Helical transmembrane passes span 30 to 50 (IVLL…WSVV), 72 to 92 (PFIH…TPLL), 103 to 123 (TAVA…YILV), 133 to 153 (AVVG…IKTF), and 164 to 184 (TKIP…IFVP). Serine 138 (nucleophile) is an active-site residue. Asparagine 185 carries N-linked (GlcNAc...) asparagine glycosylation. A helical membrane pass occupies residues 186–206 (TSFLGHLSAIIIGYLLGLGYL). Residue histidine 191 is part of the active site.

This sequence belongs to the peptidase S54 family.

It is found in the membrane. It carries out the reaction Cleaves type-1 transmembrane domains using a catalytic dyad composed of serine and histidine that are contributed by different transmembrane domains.. In terms of biological role, rhomboid protease that catalyzes intramembrane proteolysis. Required for transcription factor srbA activation by mediating its release from the membrane and thereby regulating its activity under hypoxic conditions. Essential for iron homeostasis and resistance to azoles such as voriconazole. Required for virulence in murine models of invasive pulmonary aspergillosis (IPA). The protein is Rhomboid-type serine protease B of Aspergillus fumigatus (strain CBS 144.89 / FGSC A1163 / CEA10) (Neosartorya fumigata).